We begin with the raw amino-acid sequence, 250 residues long: Orotidine 5'-phosphate decarboxylase (250 aa).

Substrate is bound by residues D9, K40, 67 to 76 (DLKFHDIPNT), T132, R190, Q204, G224, and R225. The active-site Proton donor is the K69.

The protein belongs to the OMP decarboxylase family. Type 1 subfamily. Homodimer.

It catalyses the reaction orotidine 5'-phosphate + H(+) = UMP + CO2. It functions in the pathway pyrimidine metabolism; UMP biosynthesis via de novo pathway; UMP from orotate: step 2/2. In terms of biological role, catalyzes the decarboxylation of orotidine 5'-monophosphate (OMP) to uridine 5'-monophosphate (UMP). This is Orotidine 5'-phosphate decarboxylase from Nitratidesulfovibrio vulgaris (strain DSM 19637 / Miyazaki F) (Desulfovibrio vulgaris).